The primary structure comprises 271 residues: MDLLAKASVLLLLLLSLSNAQTDNMEEAENGSSKEEIDESELEDVSSIIFRMNNNSMEELLEGDLVLPKTRNAMKCFGAPDSCRWPKSSNGIVKVPYVVSDNYESDEKETIRNAMKEFAEKTCIHFVPRNNERAYLSLEPRFGCKSMMGYVGDKQVVVLQRFGCIKHAVIQHELLHALGFYHEHTRSDRDQHVKINWENIIKDFTHNFDKNDTDNLGTPYDYGSIMHYGRTAFGKDRKETITPIPNPKAAIGQTERMSDIDILRVNKLYKC.

The first 20 residues, 1-20, serve as a signal peptide directing secretion; the sequence is MDLLAKASVLLLLLLSLSNA. A propeptide spans 21 to 71 (activation peptide); that stretch reads QTDNMEEAENGSSKEEIDESELEDVSSIIFRMNNNSMEELLEGDLVLPKTR. 2 N-linked (GlcNAc...) asparagine glycosylation sites follow: Asn30 and Asn54. One can recognise a Peptidase M12A domain in the interval 72 to 271; it reads NAMKCFGAPD…ILRVNKLYKC (200 aa). 3 cysteine pairs are disulfide-bonded: Cys76–Cys83, Cys123–Cys271, and Cys144–Cys164. Residue His172 participates in Zn(2+) binding. The active site involves Glu173. Zn(2+) contacts are provided by His176 and His182. Asn211 carries an N-linked (GlcNAc...) asparagine glycan.

Zn(2+) serves as cofactor.

The protein resides in the zymogen granule. The catalysed reaction is Hydrolysis of the inner layer of fish egg envelope. Also hydrolysis of casein and small molecule substrates such as succinyl-Leu-Leu-Val-Tyr-|-7-(4-methyl)coumarylamide.. In terms of biological role, participates in the breakdown of the egg envelope, which is derived from the egg extracellular matrix, at the time of hatching. Thus allowing the newly hatched fish to swim free. LCE solubilizes the egg envelope only after it has been swollen by the action of HCE. The protein is Low choriolytic enzyme (lce) of Oryzias latipes (Japanese rice fish).